Reading from the N-terminus, the 184-residue chain is Crossover junction endodeoxyribonuclease RuvC (184 aa).

Residues Asp-7, Glu-68, and Asp-141 contribute to the active site. Mg(2+) is bound by residues Asp-7, Glu-68, and Asp-141.

Belongs to the RuvC family. As to quaternary structure, homodimer which binds Holliday junction (HJ) DNA. The HJ becomes 2-fold symmetrical on binding to RuvC with unstacked arms; it has a different conformation from HJ DNA in complex with RuvA. In the full resolvosome a probable DNA-RuvA(4)-RuvB(12)-RuvC(2) complex forms which resolves the HJ. Mg(2+) serves as cofactor.

The protein localises to the cytoplasm. It carries out the reaction Endonucleolytic cleavage at a junction such as a reciprocal single-stranded crossover between two homologous DNA duplexes (Holliday junction).. Functionally, the RuvA-RuvB-RuvC complex processes Holliday junction (HJ) DNA during genetic recombination and DNA repair. Endonuclease that resolves HJ intermediates. Cleaves cruciform DNA by making single-stranded nicks across the HJ at symmetrical positions within the homologous arms, yielding a 5'-phosphate and a 3'-hydroxyl group; requires a central core of homology in the junction. The consensus cleavage sequence is 5'-(A/T)TT(C/G)-3'. Cleavage occurs on the 3'-side of the TT dinucleotide at the point of strand exchange. HJ branch migration catalyzed by RuvA-RuvB allows RuvC to scan DNA until it finds its consensus sequence, where it cleaves and resolves the cruciform DNA. This is Crossover junction endodeoxyribonuclease RuvC from Mycobacterium ulcerans (strain Agy99).